Consider the following 336-residue polypeptide: Ketol-acid reductoisomerase (NADP(+)) 1 (336 aa).

The 180-residue stretch at Ala-2–Thr-181 folds into the KARI N-terminal Rossmann domain. Residues Tyr-25–Gln-28, Arg-48, Ser-52, and Asp-82–Gln-85 contribute to the NADP(+) site. His-107 is an active-site residue. Residue Gly-133 participates in NADP(+) binding. One can recognise a KARI C-terminal knotted domain in the interval Thr-182 to Val-327. Mg(2+) contacts are provided by Asp-190, Glu-194, Glu-226, and Glu-230. Ser-251 provides a ligand contact to substrate.

The protein belongs to the ketol-acid reductoisomerase family. It depends on Mg(2+) as a cofactor.

It carries out the reaction (2R)-2,3-dihydroxy-3-methylbutanoate + NADP(+) = (2S)-2-acetolactate + NADPH + H(+). The catalysed reaction is (2R,3R)-2,3-dihydroxy-3-methylpentanoate + NADP(+) = (S)-2-ethyl-2-hydroxy-3-oxobutanoate + NADPH + H(+). It participates in amino-acid biosynthesis; L-isoleucine biosynthesis; L-isoleucine from 2-oxobutanoate: step 2/4. It functions in the pathway amino-acid biosynthesis; L-valine biosynthesis; L-valine from pyruvate: step 2/4. Involved in the biosynthesis of branched-chain amino acids (BCAA). Catalyzes an alkyl-migration followed by a ketol-acid reduction of (S)-2-acetolactate (S2AL) to yield (R)-2,3-dihydroxy-isovalerate. In the isomerase reaction, S2AL is rearranged via a Mg-dependent methyl migration to produce 3-hydroxy-3-methyl-2-ketobutyrate (HMKB). In the reductase reaction, this 2-ketoacid undergoes a metal-dependent reduction by NADPH to yield (R)-2,3-dihydroxy-isovalerate. This chain is Ketol-acid reductoisomerase (NADP(+)) 1, found in Bacillus cereus (strain ATCC 10987 / NRS 248).